We begin with the raw amino-acid sequence, 343 residues long: L-threonine 3-dehydrogenase (343 aa).

C38 contributes to the Zn(2+) binding site. Catalysis depends on charge relay system residues T40 and H43. 6 residues coordinate Zn(2+): H63, E64, C93, C96, C99, and C107. NAD(+) is bound by residues I175, D195, R200, L262–I264, and I286–Y287.

Belongs to the zinc-containing alcohol dehydrogenase family. In terms of assembly, homotetramer. Requires Zn(2+) as cofactor.

It localises to the cytoplasm. It carries out the reaction L-threonine + NAD(+) = (2S)-2-amino-3-oxobutanoate + NADH + H(+). It participates in amino-acid degradation; L-threonine degradation via oxydo-reductase pathway; glycine from L-threonine: step 1/2. Functionally, catalyzes the NAD(+)-dependent oxidation of L-threonine to 2-amino-3-ketobutyrate. The chain is L-threonine 3-dehydrogenase from Pectobacterium carotovorum subsp. carotovorum (strain PC1).